A 510-amino-acid polypeptide reads, in one-letter code: NAD(P)H-quinone oxidoreductase subunit 2, chloroplastic (510 aa).

13 helical membrane passes run 24-44 (LLLFHGSFIFPECILIFGLIL), 59-79 (WFYFISSTSLVMSITALLFRW), 99-119 (IFQFLILLCSTLCIPLSVEYI), 124-144 (MAITEFLLFVLTATLGGMFLC), 149-169 (XITIFVAPECFSLCSYLLSGY), 183-203 (YLLMGGASSSILVHGFSWLYG), 229-249 (ISIALISITVGIGFKLSPAPF), 295-315 (WHLLLEILAILSMILGNLIAI), 323-343 (MLAYSSIGQIGYVIIGIIVGD), 347-367 (GYASMITYMLFYISMNLGTFA), 395-415 (ALSSALCLLSLGGLPPLAGFF), 418-438 (LHLFWCGWQAGLYFLVSIGLL), and 484-504 (MTVCVIAXTIPGISMNPILAI).

It belongs to the complex I subunit 2 family. In terms of assembly, NDH is composed of at least 16 different subunits, 5 of which are encoded in the nucleus.

The protein resides in the plastid. It is found in the chloroplast thylakoid membrane. It carries out the reaction a plastoquinone + NADH + (n+1) H(+)(in) = a plastoquinol + NAD(+) + n H(+)(out). It catalyses the reaction a plastoquinone + NADPH + (n+1) H(+)(in) = a plastoquinol + NADP(+) + n H(+)(out). Functionally, NDH shuttles electrons from NAD(P)H:plastoquinone, via FMN and iron-sulfur (Fe-S) centers, to quinones in the photosynthetic chain and possibly in a chloroplast respiratory chain. The immediate electron acceptor for the enzyme in this species is believed to be plastoquinone. Couples the redox reaction to proton translocation, and thus conserves the redox energy in a proton gradient. The polypeptide is NAD(P)H-quinone oxidoreductase subunit 2, chloroplastic (Narcissus elegans (Daffodil)).